The following is a 34-amino-acid chain: Putative protein YmiB (34 aa).

A helical transmembrane segment spans residues T7–W24.

It localises to the membrane. The protein is Putative protein YmiB (ymiB) of Escherichia coli (strain K12).